We begin with the raw amino-acid sequence, 344 residues long: MTRLTLAIDAMGGDFGPCVTVPASLQALESNPHLHLLLVGDPDIITSSLATADSALRARLQIIAAESVIASDARPSQAIRASRGTSMRIALEQVKEGHAQACISAGNTGALMGLAKLLLKPLDGIDRPALMTVLPHQQHGKTVVLDLGANVDSDSAMLVQFAVMGAVVAEEVLAISRPRVALINIGQEDSKGLTSIRDAAAILRAAAEINFIGYLEGNDLLTGKTDVLVCDGFVGNVTLKTMEGVVRMFLSLLKSQGEGKKKAWWLRLLGRILQKRLAKKFGHLNPDQYNGACLLGLRGTVIKSHGAANQRAFTVAIQQAEQAVQRQIPQRIAARLEAVLPKSD.

The protein belongs to the PlsX family. In terms of assembly, homodimer. Probably interacts with PlsY.

The protein resides in the cytoplasm. It catalyses the reaction a fatty acyl-[ACP] + phosphate = an acyl phosphate + holo-[ACP]. It functions in the pathway lipid metabolism; phospholipid metabolism. Catalyzes the reversible formation of acyl-phosphate (acyl-PO(4)) from acyl-[acyl-carrier-protein] (acyl-ACP). This enzyme utilizes acyl-ACP as fatty acyl donor, but not acyl-CoA. This Erwinia tasmaniensis (strain DSM 17950 / CFBP 7177 / CIP 109463 / NCPPB 4357 / Et1/99) protein is Phosphate acyltransferase.